Consider the following 205-residue polypeptide: Protein phosphatase inhibitor 2 (205 aa).

Disordered regions lie at residues 1–46 and 64–205; these read MAAS…KSQK and GLMK…SQSS. The residue at position 2 (Ala2) is an N-acetylalanine. Required for binding PPP1CC stretches follow at residues 12–17 and 43–55; these read KGILKN and KSQK…ILAT. The segment covering 17-26 has biased composition (polar residues); that stretch reads NKTSSTSSRV. The segment covering 35–46 has biased composition (basic and acidic residues); that stretch reads SVDEELSKKSQK. Position 44 is a phosphoserine; by ATM (Ser44). Position 73 is a phosphothreonine; by GSK3 (Thr73). A compositionally biased stretch (acidic residues) spans 80 to 91; it reads GDDDDAYSDTET. Ser87 is modified (phosphoserine). A phosphothreonine mark is found at Thr89, Thr92, and Thr96. Basic and acidic residues predominate over residues 110-120; sequence SEPKYRIREQE. Phosphoserine is present on residues Ser121, Ser122, Ser127, and Ser130. The span at 121–130 shows a compositional bias: acidic residues; that stretch reads SSGEEDSDLS. Over residues 131 to 143 the composition is skewed to basic and acidic residues; sequence PEEREKKRQFEMK. Residues 147–150 form a required for binding PPP1CC catalytic center, displacing metal ions and inhibition of PPP1CC catalytic activity region; that stretch reads HYNE. Positions 167–179 are enriched in acidic residues; the sequence is DDEEDEEMSETAD. Polar residues predominate over residues 182–205; it reads SMNTEESNQGSTPSDQRQNKSQSS.

The protein belongs to the protein phosphatase inhibitor 2 family. Heterodimer with PP1. In terms of processing, phosphorylation on Ser-44 by ATM activates PP1 by dissociating the PP1-PPP1R2 complex. Phosphorylation on Thr-73 by GSK3 activates PP1 by dissociating the PP1-PPP1R2 complex.

Inhibitor of protein-phosphatase 1. This is Protein phosphatase inhibitor 2 (PPP1R2) from Oryctolagus cuniculus (Rabbit).